A 1872-amino-acid chain; its full sequence is Chitin synthase 6 (1872 aa).

The tract at residues 1 to 23 is disordered; the sequence is MAQHLPPVGGNGGAHTQPSLPAL. A Myosin motor domain is found at 1–779; that stretch reads MAQHLPPVGG…CWMEIAQLSD (779 aa). 104–111 lines the ATP pocket; the sequence is GESGSGKT. 4 N-linked (GlcNAc...) asparagine glycosylation sites follow: N123, N291, N428, and N559. The tract at residues 587 to 652 is disordered; it reads VMQASVSSKP…VNKPSEEGAS (66 aa). Positions 659-683 are actin-binding; sequence LDNVTKSFHAQNTNAYFVFCLKPND. N-linked (GlcNAc...) asparagine glycosylation occurs at N661. The next 2 membrane-spanning stretches (helical) occupy residues 881–901 and 920–940; these read WVFI…QHLG and FIIW…PMLV. In terms of domain architecture, Cytochrome b5 heme-binding spans 944–1003; that stretch reads QYVFTGEELSAYNGKDGKASYAAIRGQVFDIGSFIPRHPLPYLPSKLFTQYAGTDITGLF. N-linked (GlcNAc...) asparagine glycans are attached at residues N1030, N1055, and N1120. A helical membrane pass occupies residues 1193-1213; it reads FILAVTIILCSIIAFKFLAAL. N1450 and N1556 each carry an N-linked (GlcNAc...) asparagine glycan. Helical transmembrane passes span 1581–1601, 1614–1634, and 1641–1661; these read FIVF…AYIV, VPVL…IIFI, and MIAW…GLPL. The 56-residue stretch at 1814 to 1869 folds into the DEK-C domain; it reads LPSDDALLAEIREILRTADLMTVTKKGVKQELERRFGVNLDSRRAYINSATEALLS.

The protein belongs to the chitin synthase family. Class V subfamily.

It is found in the cell membrane. It carries out the reaction [(1-&gt;4)-N-acetyl-beta-D-glucosaminyl](n) + UDP-N-acetyl-alpha-D-glucosamine = [(1-&gt;4)-N-acetyl-beta-D-glucosaminyl](n+1) + UDP + H(+). Functionally, polymerizes chitin, a structural polymer of the cell wall and septum, by transferring the sugar moiety of UDP-GlcNAc to the non-reducing end of the growing chitin polymer. Required for appressorium penetration and invasive growth. The chain is Chitin synthase 6 from Pyricularia oryzae (strain 70-15 / ATCC MYA-4617 / FGSC 8958) (Rice blast fungus).